Consider the following 464-residue polypeptide: tRNA-2-methylthio-N(6)-dimethylallyladenosine synthase (464 aa).

Residues 19-135 (GSYWITTFGC…LENLLGKVDL (117 aa)) form the MTTase N-terminal domain. [4Fe-4S] cluster contacts are provided by C28, C64, C98, C170, C174, and C177. The Radical SAM core domain maps to 156-394 (RESSICGWVN…DLVEKTARSR (239 aa)). Residues 396–464 (KRYINNIESV…PFSLTGELYL (69 aa)) enclose the TRAM domain.

Belongs to the methylthiotransferase family. MiaB subfamily. In terms of assembly, monomer. Requires [4Fe-4S] cluster as cofactor.

The protein resides in the cytoplasm. It carries out the reaction N(6)-dimethylallyladenosine(37) in tRNA + (sulfur carrier)-SH + AH2 + 2 S-adenosyl-L-methionine = 2-methylsulfanyl-N(6)-dimethylallyladenosine(37) in tRNA + (sulfur carrier)-H + 5'-deoxyadenosine + L-methionine + A + S-adenosyl-L-homocysteine + 2 H(+). Catalyzes the methylthiolation of N6-(dimethylallyl)adenosine (i(6)A), leading to the formation of 2-methylthio-N6-(dimethylallyl)adenosine (ms(2)i(6)A) at position 37 in tRNAs that read codons beginning with uridine. The polypeptide is tRNA-2-methylthio-N(6)-dimethylallyladenosine synthase (Prochlorococcus marinus (strain AS9601)).